The chain runs to 116 residues: MSIQDYPSRLSDPQSRKAETFSYLPKMTAEQIKAQVQYIIDRGWNPAIEHSEPENAFSYYWYMWKLPMFGETDADAVLAEVDACIKANPNNHVRLIGYDNYAQSQGANMLVKRGDM.

Belongs to the RuBisCO small chain family. As to quaternary structure, heterohexadecamer of 8 large and 8 small subunits.

It localises to the cytoplasm. RuBisCO catalyzes two reactions: the carboxylation of D-ribulose 1,5-bisphosphate, the primary event in carbon dioxide fixation, as well as the oxidative fragmentation of the pentose substrate. Both reactions occur simultaneously and in competition at the same active site. Although the small subunit is not catalytic it is essential for maximal activity. Its function is as follows. Can replace the endogenous type I ccbS gene in H.neapolitanus, reconstituting RuBisCO with about 10% of normal activity; the active enzyme is targeted to carboxysomes. This is Ribulose bisphosphate carboxylase small subunit 1 from Hydrogenovibrio crunogenus (strain DSM 25203 / XCL-2) (Thiomicrospira crunogena).